The following is a 750-amino-acid chain: Methylmalonyl-CoA mutase, mitochondrial (750 aa).

The transit peptide at 1–32 (MLRAKNQLFLLSPHYLRQVKESSGSRLIQQRL) directs the protein to the mitochondrion. A malonyl-CoA-binding site is contributed by Gln-50. The residue at position 89 (Lys-89) is an N6-acetyllysine. Residues 96-99 (YPTM) and 106-110 (TIRQY) contribute to the malonyl-CoA site. Residue Lys-212 is modified to N6-acetyllysine. Residues 216–218 (TIQ), Arg-228, Lys-255, His-265, and 304–306 (RLS) each bind malonyl-CoA. Position 335 is an N6-acetyllysine (Lys-335). Lys-343 is modified (N6-succinyllysine). The residue at position 481 (Ser-481) is a Phosphoserine. Lys-595 carries the N6-succinyllysine modification. Residue Lys-602 is modified to N6-acetyllysine. The B12-binding domain occupies 614–746 (RPRLLVAKMG…DDIEKCLEKK (133 aa)). An adenosylcob(III)alamin-binding site is contributed by His-627.

The protein belongs to the methylmalonyl-CoA mutase family. In terms of assembly, homodimer. Interacts (the apoenzyme form) with MMAA; the interaction is GTP dependent. Requires adenosylcob(III)alamin as cofactor.

Its subcellular location is the mitochondrion matrix. The protein localises to the mitochondrion. It is found in the cytoplasm. It catalyses the reaction (R)-methylmalonyl-CoA = succinyl-CoA. Its activity is regulated as follows. Inhibited by itaconyl-CoA, a metabolite that inactivates the coenzyme B12 cofactor. In terms of biological role, catalyzes the reversible isomerization of methylmalonyl-CoA (MMCoA) (generated from branched-chain amino acid metabolism and degradation of dietary odd chain fatty acids and cholesterol) to succinyl-CoA (3-carboxypropionyl-CoA), a key intermediate of the tricarboxylic acid cycle. The chain is Methylmalonyl-CoA mutase, mitochondrial (MMUT) from Bos taurus (Bovine).